A 432-amino-acid chain; its full sequence is Tol-Pal system protein TolB (432 aa).

A signal peptide spans 1-21 (MKHVRIFATLLALLVISVTPA).

It belongs to the TolB family. As to quaternary structure, the Tol-Pal system is composed of five core proteins: the inner membrane proteins TolA, TolQ and TolR, the periplasmic protein TolB and the outer membrane protein Pal. They form a network linking the inner and outer membranes and the peptidoglycan layer.

It is found in the periplasm. In terms of biological role, part of the Tol-Pal system, which plays a role in outer membrane invagination during cell division and is important for maintaining outer membrane integrity. The protein is Tol-Pal system protein TolB of Geobacter sulfurreducens (strain ATCC 51573 / DSM 12127 / PCA).